The sequence spans 153 residues: Endoribonuclease YbeY (153 aa).

His-114, His-118, and His-124 together coordinate Zn(2+).

Belongs to the endoribonuclease YbeY family. Requires Zn(2+) as cofactor.

It is found in the cytoplasm. Its function is as follows. Single strand-specific metallo-endoribonuclease involved in late-stage 70S ribosome quality control and in maturation of the 3' terminus of the 16S rRNA. This chain is Endoribonuclease YbeY, found in Shewanella putrefaciens (strain CN-32 / ATCC BAA-453).